A 452-amino-acid polypeptide reads, in one-letter code: GTPase Der (452 aa).

EngA-type G domains are found at residues 4–169 (PIVA…PTTE) and 177–352 (IKVA…ASHR). GTP is bound by residues 10-17 (GRPNVGKS), 57-61 (DTGGL), 120-123 (NKCE), 183-190 (GRPNVGKS), 230-234 (DTAGI), and 295-298 (NKWD). One can recognise a KH-like domain in the interval 353 to 438 (RRVSTAVINE…PIRLIWRGKS (86 aa)).

This sequence belongs to the TRAFAC class TrmE-Era-EngA-EngB-Septin-like GTPase superfamily. EngA (Der) GTPase family. In terms of assembly, associates with the 50S ribosomal subunit.

Functionally, GTPase that plays an essential role in the late steps of ribosome biogenesis. In Gloeothece citriformis (strain PCC 7424) (Cyanothece sp. (strain PCC 7424)), this protein is GTPase Der.